Reading from the N-terminus, the 394-residue chain is Elongation factor Tu 1 (394 aa).

The tr-type G domain occupies 10–204; sequence KPHVNVGTIG…ALDSYIPEPQ (195 aa). The segment at 19-26 is G1; it reads GHVDHGKT. 19-26 contacts GTP; it reads GHVDHGKT. T26 is a Mg(2+) binding site. The G2 stretch occupies residues 60 to 64; that stretch reads GITIS. Positions 81–84 are G3; sequence DCPG. GTP is bound by residues 81-85 and 136-139; these read DCPGH and NKCD. Positions 136–139 are G4; sequence NKCD. The segment at 174–176 is G5; sequence SAL.

Belongs to the TRAFAC class translation factor GTPase superfamily. Classic translation factor GTPase family. EF-Tu/EF-1A subfamily. In terms of assembly, monomer.

It localises to the cytoplasm. It carries out the reaction GTP + H2O = GDP + phosphate + H(+). GTP hydrolase that promotes the GTP-dependent binding of aminoacyl-tRNA to the A-site of ribosomes during protein biosynthesis. This Pseudoalteromonas translucida (strain TAC 125) protein is Elongation factor Tu 1.